The following is a 470-amino-acid chain: GTPase Der (470 aa).

EngA-type G domains lie at 2 to 165 (KTIA…GLEA) and 201 to 372 (IRVG…ENFS). Residues 8–15 (GKPNVGKS), 55–59 (DTGGI), 117–120 (NKID), 207–214 (GKVNVGKS), 254–258 (DTAGI), and 318–321 (NKWD) each bind GTP. Positions 373–457 (RRIPTSILNK…PILIRARKRG (85 aa)) constitute a KH-like domain.

It belongs to the TRAFAC class TrmE-Era-EngA-EngB-Septin-like GTPase superfamily. EngA (Der) GTPase family. In terms of assembly, associates with the 50S ribosomal subunit.

Its function is as follows. GTPase that plays an essential role in the late steps of ribosome biogenesis. This Wolinella succinogenes (strain ATCC 29543 / DSM 1740 / CCUG 13145 / JCM 31913 / LMG 7466 / NCTC 11488 / FDC 602W) (Vibrio succinogenes) protein is GTPase Der.